Consider the following 343-residue polypeptide: Tribbles homolog 2 (343 aa).

Residues 25-50 (EELSSIRSAEPSQSFSPNLGSPSPPE) form a disordered region. Residues 29-45 (SIRSAEPSQSFSPNLGS) are compositionally biased toward polar residues. The 248-residue stretch at 61 to 308 (IGKYLLLEPL…SQEILDHPWF (248 aa)) folds into the Protein kinase domain.

Belongs to the protein kinase superfamily. CAMK Ser/Thr protein kinase family. Tribbles subfamily. In terms of tissue distribution, highly expressed in the thyroid, also present in ovary and cerebrum.

Its subcellular location is the cytoplasm. The protein localises to the cytoskeleton. Interacts with MAPK kinases and regulates activation of MAP kinases. Does not display kinase activity. The protein is Tribbles homolog 2 of Canis lupus familiaris (Dog).